The sequence spans 199 residues: Transgelin-3 (199 aa).

The region spanning Ala24–Ala136 is the Calponin-homology (CH) domain. Ser163 carries the phosphoserine modification. Residues Ile174–Met199 form a Calponin-like repeat. Polar residues predominate over residues Leu176–Gly188. A disordered region spans residues Leu176–Met199.

It belongs to the calponin family.

The sequence is that of Transgelin-3 (TAGLN3) from Pongo abelii (Sumatran orangutan).